We begin with the raw amino-acid sequence, 961 residues long: Valine--tRNA ligase (961 aa).

A 'HIGH' region motif is present at residues 48–58 (PNVTGSLHMGH). The 'KMSKS' region signature appears at 560-564 (KMSKS). Lys-563 contributes to the ATP binding site. Residues 892–961 (FINKDTELAR…QAQFKAIEAL (70 aa)) are a coiled coil.

It belongs to the class-I aminoacyl-tRNA synthetase family. ValS type 1 subfamily. As to quaternary structure, monomer.

It localises to the cytoplasm. The catalysed reaction is tRNA(Val) + L-valine + ATP = L-valyl-tRNA(Val) + AMP + diphosphate. Functionally, catalyzes the attachment of valine to tRNA(Val). As ValRS can inadvertently accommodate and process structurally similar amino acids such as threonine, to avoid such errors, it has a 'posttransfer' editing activity that hydrolyzes mischarged Thr-tRNA(Val) in a tRNA-dependent manner. The polypeptide is Valine--tRNA ligase (Haemophilus ducreyi (strain 35000HP / ATCC 700724)).